The chain runs to 457 residues: MIKLSTVQLAQILQAKLIGDENVQVEKINTDTRKSVSNSLFFALKGEKFDAHQYLDQAVSQGALALVVQQENSSISVPQLVVKDTRIALGELAKWLREKINPRTVAMTGSSGKTTVKEMTASILQHTAADSEAVLFTNGNFNNDIGVPLTLLRLTEKHRFAVIELGANHQNEINYTTKLVQPNAALINNIAPAHLEGFGSLAGVVQAKGEIYRGLTKNGVAIINAEHNHLDIWQKEISNHAIQYFNGKDYSAKNIHHTSQGSTFTLISPQGEIEITLPYLGEHNVKNALAATALAMNVGATLTDVKAGLEQRSQVKGRLFPIQVTPNLLLLDDTYNANKDSLCAAIDVLKGYDAFRILCVGDMKELGENSLAIHREVGQYINLVNLDLVCSYGNESAVISEAVSGKHFTDKTEMVDFLVPLIENQLQQNKKVVVLGKGSRSMKMEDVIYSLKDKIKC.

Residue 109–115 participates in ATP binding; that stretch reads GSSGKTT.

It belongs to the MurCDEF family. MurF subfamily.

It localises to the cytoplasm. The enzyme catalyses D-alanyl-D-alanine + UDP-N-acetyl-alpha-D-muramoyl-L-alanyl-gamma-D-glutamyl-meso-2,6-diaminopimelate + ATP = UDP-N-acetyl-alpha-D-muramoyl-L-alanyl-gamma-D-glutamyl-meso-2,6-diaminopimeloyl-D-alanyl-D-alanine + ADP + phosphate + H(+). The protein operates within cell wall biogenesis; peptidoglycan biosynthesis. Involved in cell wall formation. Catalyzes the final step in the synthesis of UDP-N-acetylmuramoyl-pentapeptide, the precursor of murein. This is UDP-N-acetylmuramoyl-tripeptide--D-alanyl-D-alanine ligase from Haemophilus influenzae (strain ATCC 51907 / DSM 11121 / KW20 / Rd).